We begin with the raw amino-acid sequence, 415 residues long: Glutamyl-tRNA reductase (415 aa).

Residues 49–52, Ser104, 109–111, and Gln115 contribute to the substrate site; these read TCNR and EPQ. The active-site Nucleophile is the Cys50. 184-189 provides a ligand contact to NADP(+); the sequence is GAGEMI.

Belongs to the glutamyl-tRNA reductase family. In terms of assembly, homodimer.

It carries out the reaction (S)-4-amino-5-oxopentanoate + tRNA(Glu) + NADP(+) = L-glutamyl-tRNA(Glu) + NADPH + H(+). Its pathway is porphyrin-containing compound metabolism; protoporphyrin-IX biosynthesis; 5-aminolevulinate from L-glutamyl-tRNA(Glu): step 1/2. Its function is as follows. Catalyzes the NADPH-dependent reduction of glutamyl-tRNA(Glu) to glutamate 1-semialdehyde (GSA). The chain is Glutamyl-tRNA reductase from Neisseria meningitidis serogroup C (strain 053442).